Reading from the N-terminus, the 414-residue chain is Snake venom metalloproteinase atrolysin-D (414 aa).

The N-terminal stretch at 1–20 is a signal peptide; sequence MIEVLLVTICLAVFPYQGSS. Positions 21–190 are excised as a propeptide; sequence IILESGNVND…KASDLNLNPD (170 aa). Q191 is modified (pyrrolidone carboxylic acid). The region spanning 197–393 is the Peptidase M12B domain; it reads RYIELVVVAD…YKPQCILNKP (197 aa). The Ca(2+) site is built by E200 and D284. 2 disulfide bridges follow: C308–C388 and C348–C355. Position 333 (H333) interacts with Zn(2+). E334 is an active-site residue. The Zn(2+) site is built by H337 and H343. Ca(2+) contacts are provided by C388 and N391. A propeptide spanning residues 394–414 is cleaved from the precursor; it reads LRIDPVSTPVSGNELLEAGEE.

The protein belongs to the venom metalloproteinase (M12B) family. P-I subfamily. As to quaternary structure, monomer. Zn(2+) is required as a cofactor. In terms of processing, the N-terminus is blocked. As to expression, expressed by the venom gland.

It localises to the secreted. It catalyses the reaction Cleavage of 5-His-|-Leu-6, 10-His-|-Leu-11, 14-Ala-|-Leu-15, 16-Tyr-|-Leu-17 and 23-Gly-|-Phe-24 of insulin B chain. With small molecule substrates prefers hydrophobic residue at P2' and small residue such as Ala, Gly at P1.. Functionally, snake venom zinc metalloproteinase that causes hemorrhage by provoking the degradation of the sub-endothelial matrix proteins (fibronectin, laminin, type IV collagen, nidogen, and gelatins). The protein is Snake venom metalloproteinase atrolysin-D of Crotalus atrox (Western diamondback rattlesnake).